Here is a 259-residue protein sequence, read N- to C-terminus: Translation initiation factor IF-2, chloroplastic (259 aa).

One can recognise a tr-type G domain in the interval 171–259 (LRAPIVAVLG…LLIIAADEGI (89 aa)). 180–187 (GHVNHGKT) contacts GTP.

The protein belongs to the TRAFAC class translation factor GTPase superfamily. Classic translation factor GTPase family. IF-2 subfamily.

It is found in the plastid. It localises to the chloroplast. One of the essential components for the initiation of protein synthesis. Protects formylmethionyl-tRNA from spontaneous hydrolysis and promotes its binding to the 30S ribosomal subunits. Also involved in the hydrolysis of GTP during the formation of the 70S ribosomal complex. In Galdieria sulphuraria (Red alga), this protein is Translation initiation factor IF-2, chloroplastic (infB).